Reading from the N-terminus, the 415-residue chain is 4-hydroxy-3-methylbut-2-enyl diphosphate reductase (415 aa).

Cys-66 is a binding site for [4Fe-4S] cluster. His-96 is a binding site for (2E)-4-hydroxy-3-methylbut-2-enyl diphosphate. His-96 contacts dimethylallyl diphosphate. Isopentenyl diphosphate is bound at residue His-96. Residue Cys-158 participates in [4Fe-4S] cluster binding. His-186 provides a ligand contact to (2E)-4-hydroxy-3-methylbut-2-enyl diphosphate. His-186 is a binding site for dimethylallyl diphosphate. His-186 is an isopentenyl diphosphate binding site. Glu-188 serves as the catalytic Proton donor. Thr-259 provides a ligand contact to (2E)-4-hydroxy-3-methylbut-2-enyl diphosphate. Cys-297 serves as a coordination point for [4Fe-4S] cluster. 4 residues coordinate (2E)-4-hydroxy-3-methylbut-2-enyl diphosphate: Ser-326, Ser-327, Asn-328, and Ser-388. The dimethylallyl diphosphate site is built by Ser-326, Ser-327, Asn-328, and Ser-388. Isopentenyl diphosphate is bound by residues Ser-326, Ser-327, Asn-328, and Ser-388.

The protein belongs to the IspH family. Requires [4Fe-4S] cluster as cofactor.

The enzyme catalyses isopentenyl diphosphate + 2 oxidized [2Fe-2S]-[ferredoxin] + H2O = (2E)-4-hydroxy-3-methylbut-2-enyl diphosphate + 2 reduced [2Fe-2S]-[ferredoxin] + 2 H(+). The catalysed reaction is dimethylallyl diphosphate + 2 oxidized [2Fe-2S]-[ferredoxin] + H2O = (2E)-4-hydroxy-3-methylbut-2-enyl diphosphate + 2 reduced [2Fe-2S]-[ferredoxin] + 2 H(+). The protein operates within isoprenoid biosynthesis; dimethylallyl diphosphate biosynthesis; dimethylallyl diphosphate from (2E)-4-hydroxy-3-methylbutenyl diphosphate: step 1/1. Its pathway is isoprenoid biosynthesis; isopentenyl diphosphate biosynthesis via DXP pathway; isopentenyl diphosphate from 1-deoxy-D-xylulose 5-phosphate: step 6/6. Functionally, catalyzes the conversion of 1-hydroxy-2-methyl-2-(E)-butenyl 4-diphosphate (HMBPP) into a mixture of isopentenyl diphosphate (IPP) and dimethylallyl diphosphate (DMAPP). Acts in the terminal step of the DOXP/MEP pathway for isoprenoid precursor biosynthesis. In Acaryochloris marina (strain MBIC 11017), this protein is 4-hydroxy-3-methylbut-2-enyl diphosphate reductase.